The following is a 386-amino-acid chain: DNA-directed RNA polymerase subunit Rpo1C (386 aa).

Belongs to the RNA polymerase beta' chain family. Part of the RNA polymerase complex.

The protein resides in the cytoplasm. It catalyses the reaction RNA(n) + a ribonucleoside 5'-triphosphate = RNA(n+1) + diphosphate. Its function is as follows. DNA-dependent RNA polymerase (RNAP) catalyzes the transcription of DNA into RNA using the four ribonucleoside triphosphates as substrates. Forms part of the jaw domain. This chain is DNA-directed RNA polymerase subunit Rpo1C, found in Methanococcus maripaludis (strain C6 / ATCC BAA-1332).